The primary structure comprises 469 residues: Coiled-coil domain-containing protein 6 (469 aa).

Over residues 1–10 (MADSASESDT) the composition is skewed to acidic residues. A disordered region spans residues 1–37 (MADSASESDTDAAGGGPAAMQSSCSATSGGSGGGGGG). Ala2 carries the post-translational modification N-acetylalanine. Ser45 carries the post-translational modification Phosphoserine. Residues 47–320 (FRLEELTNRL…LCRQLSESES (274 aa)) are a coiled coil. 3 consecutive repeat copies span residues 99 to 127 (EQEEEFISNTLFKKIQALQKEKETLAVNY), 128 to 156 (EKEEEFLTNELSRKLMQLQHEKAELEQHL), and 157 to 185 (EQEQEFQVNKLMKKIKKLENDTISKQLTL). Positions 99–228 (EQEEEFISNT…AEKRILQEKL (130 aa)) are 5 X 29 AA tandem repeats. Residues 186–199 (EQLRREKIDLENTL) form a 4; approximate repeat. Copy 5 of the repeat occupies 200 to 228 (EQEQEALVNRLWKRMDKLEAEKRILQEKL). Phosphoserine occurs at positions 233, 237, 242, 247, 277, and 316. The segment at 335 to 362 (AQGLRPRTVSSPIPYTPSPSSSRPISPG) is disordered. Thr342 carries the post-translational modification Phosphothreonine. Positions 344 to 361 (SSPIPYTPSPSSSRPISP) are enriched in low complexity. 2 positions are modified to phosphoserine: Ser356 and Ser360. Arg380 bears the Omega-N-methylarginine mark. Phosphoserine is present on residues Ser388 and Ser406. Residues 394–469 (QHMGASHGIT…QHPVHPSSQP (76 aa)) are disordered. Pro residues predominate over residues 419-444 (PTPPPSPNTQSPVQPPPPPPPPPMQP). The short motif at 435 to 444 (PPPPPPPMQP) is the SH3-binding element. The segment covering 460 to 469 (QHPVHPSSQP) has biased composition (low complexity).

It localises to the cytoplasm. The protein localises to the cytoskeleton. This is Coiled-coil domain-containing protein 6 (Ccdc6) from Mus musculus (Mouse).